Consider the following 84-residue polypeptide: GTP cyclohydrolase 1 feedback regulatory protein (84 aa).

Belongs to the GFRP family. Homopentamer. Forms a complex with GCH1 where a GCH1 homodecamer is sandwiched by two GFRP homopentamers.

Its subcellular location is the nucleus. It is found in the nucleus membrane. It localises to the cytoplasm. The protein resides in the cytosol. Its function is as follows. Mediates tetrahydrobiopterin inhibition of GTP cyclohydrolase 1. The polypeptide is GTP cyclohydrolase 1 feedback regulatory protein (gchfr) (Xenopus laevis (African clawed frog)).